The sequence spans 893 residues: DNA mismatch repair protein MutS (893 aa).

Residues M1 to A17 show a composition bias toward low complexity. A disordered region spans residues M1–T22. ATP is bound at residue G641–S648.

It belongs to the DNA mismatch repair MutS family.

Functionally, this protein is involved in the repair of mismatches in DNA. It is possible that it carries out the mismatch recognition step. This protein has a weak ATPase activity. The chain is DNA mismatch repair protein MutS from Herminiimonas arsenicoxydans.